The sequence spans 191 residues: MKAFSPLAVLISALLLQGCVAAAVVGTAAVGTKAATDPRSVGTQVDDGTLELRVSSALSKDEQIKKETRINVTAYQGKVLLVGQSPNSELSARAKQIAMGVEGTTEVYNEIRQGQPIGLGTASNDTWITTKVRSQLLTSDQVKSSNVKVTTENGEVFLLGLVTEREGKAAADIASRVSGVKRVTTAFTYIK.

The first 18 residues, Met-1–Gly-18, serve as a signal peptide directing secretion. The N-palmitoyl cysteine moiety is linked to residue Cys-19. Cys-19 carries S-diacylglycerol cysteine lipidation. BON domains lie at Asp-46–Gln-115 and Asn-124–Lys-191.

The protein belongs to the lipoprotein DolP family.

The protein localises to the cell outer membrane. Plays an important role in maintaining outer membrane integrity. Contributes to virulence. The protein is Outer membrane lipoprotein DolP of Salmonella typhimurium (strain LT2 / SGSC1412 / ATCC 700720).